A 594-amino-acid polypeptide reads, in one-letter code: Membrane protein insertase YidC (594 aa).

A helical membrane pass occupies residues 7–27; that stretch reads YFVAIALSVLILIAWQFFYVS. Residues 36-73 form a disordered region; that stretch reads AAEQAQQAQQTQQQPGAQPAAPGQALPGGAIPSAGESR. Residues 37-65 show a composition bias toward low complexity; sequence AEQAQQAQQTQQQPGAQPAAPGQALPGGA. 4 helical membrane-spanning segments follow: residues 369-389, 443-463, 488-508, and 532-552; these read LFGN…LIFF, WPIL…YVTI, LFGL…WPII, and FTWM…GLVI.

It belongs to the OXA1/ALB3/YidC family. Type 1 subfamily. In terms of assembly, interacts with the Sec translocase complex via SecD. Specifically interacts with transmembrane segments of nascent integral membrane proteins during membrane integration.

The protein resides in the cell inner membrane. Required for the insertion and/or proper folding and/or complex formation of integral membrane proteins into the membrane. Involved in integration of membrane proteins that insert both dependently and independently of the Sec translocase complex, as well as at least some lipoproteins. Aids folding of multispanning membrane proteins. The protein is Membrane protein insertase YidC of Rhizobium meliloti (strain 1021) (Ensifer meliloti).